We begin with the raw amino-acid sequence, 218 residues long: Capsid protein (218 aa).

Met-1 bears the N-acetylmethionine; by host mark. The span at 1-10 (MDKSESTSAG) shows a compositional bias: low complexity. The segment at 1-30 (MDKSESTSAGRNRRRRPRRGSRSASSSADA) is disordered. A compositionally biased stretch (basic residues) spans 11–21 (RNRRRRPRRGS).

Belongs to the cucumovirus capsid protein family.

Its subcellular location is the virion. Functionally, capsid protein. Probably binds RNA and plays a role in packaging. This is Capsid protein from Cucumber mosaic virus (strain P6) (CMV).